Reading from the N-terminus, the 521-residue chain is GMP synthase [glutamine-hydrolyzing] (521 aa).

Positions 8–203 constitute a Glutamine amidotransferase type-1 domain; the sequence is KILILDFGAQ…VVDICGCQTL (196 aa). Residue Cys85 is the Nucleophile of the active site. Catalysis depends on residues His177 and Glu179. The region spanning 204–396 is the GMPS ATP-PPase domain; the sequence is WTAANIIDDQ…LGLPRTMVYR (193 aa). An ATP-binding site is contributed by 231–237; it reads SGGVDSS.

In terms of assembly, homodimer.

It catalyses the reaction XMP + L-glutamine + ATP + H2O = GMP + L-glutamate + AMP + diphosphate + 2 H(+). It participates in purine metabolism; GMP biosynthesis; GMP from XMP (L-Gln route): step 1/1. Its function is as follows. Catalyzes the synthesis of GMP from XMP. The polypeptide is GMP synthase [glutamine-hydrolyzing] (Xanthomonas oryzae pv. oryzae (strain MAFF 311018)).